Consider the following 490-residue polypeptide: Bifunctional protein HldE (490 aa).

Positions 1-330 are ribokinase; sequence MLDFEQLSPA…RKILPHAFLA (330 aa). 205-208 lines the ATP pocket; that stretch reads NRKE. Asp275 is an active-site residue. The tract at residues 358–490 is cytidylyltransferase; it reads FTNGCFDILH…LVARAQNGKS (133 aa).

It in the N-terminal section; belongs to the carbohydrate kinase PfkB family. This sequence in the C-terminal section; belongs to the cytidylyltransferase family. As to quaternary structure, homodimer.

It catalyses the reaction D-glycero-beta-D-manno-heptose 7-phosphate + ATP = D-glycero-beta-D-manno-heptose 1,7-bisphosphate + ADP + H(+). The enzyme catalyses D-glycero-beta-D-manno-heptose 1-phosphate + ATP + H(+) = ADP-D-glycero-beta-D-manno-heptose + diphosphate. The protein operates within nucleotide-sugar biosynthesis; ADP-L-glycero-beta-D-manno-heptose biosynthesis; ADP-L-glycero-beta-D-manno-heptose from D-glycero-beta-D-manno-heptose 7-phosphate: step 1/4. It participates in nucleotide-sugar biosynthesis; ADP-L-glycero-beta-D-manno-heptose biosynthesis; ADP-L-glycero-beta-D-manno-heptose from D-glycero-beta-D-manno-heptose 7-phosphate: step 3/4. Its function is as follows. Catalyzes the phosphorylation of D-glycero-D-manno-heptose 7-phosphate at the C-1 position to selectively form D-glycero-beta-D-manno-heptose-1,7-bisphosphate. In terms of biological role, catalyzes the ADP transfer from ATP to D-glycero-beta-D-manno-heptose 1-phosphate, yielding ADP-D-glycero-beta-D-manno-heptose. The chain is Bifunctional protein HldE from Rhodopseudomonas palustris (strain BisA53).